We begin with the raw amino-acid sequence, 540 residues long: MTASSKTPASSSGPSPHAASAHDKILIVDFGSQVTQLIARRIREEGVYSEIVPFQKAEAAFLEMKPKAVILSGGPASVLDKDAPAAPMSILKAGVPVLGICYGEQTMAQQLGGTVEAGHHREFGRAAIEVTDTCALFEGVWEKGGHYNVWMSHGDRVTKLPDGFRAVAKAQGSPIAVIADDARRFYAMQFHPEVVHTPDGAKLLRNFVRKVAGLTGDWTMRAFREEAIEKIRAQVGKGRVICGLSGGVDSSVAAILIHEAIGEQLTCVFVDHGMLRKDEGKTVVELFRHHYNIPLVHVDASKQFLGELAGVTDPEMKRKTIGRLFIDVFEAEAKKIAALGKGSAEFLAQGTLYPDVIESVSFTGGPSVTIKSHHNVGGLPDRMNMKLVEPLRELFKDEVRALGRELGLPEIFVGRHPFPGPGLAIRCPGEITREKLDILREADAVYIDQIRKAGLYDKIWQAFAVLLPVKTVGVMGDGRTYEYVVGLRAVTSTDGMTADFYAFDATFLGATATSIINEVKGVNRVVYDVTSKPPGTIEWE.

The 194-residue stretch at 24–217 (KILIVDFGSQ…VRKVAGLTGD (194 aa)) folds into the Glutamine amidotransferase type-1 domain. The Nucleophile role is filled by Cys101. Active-site residues include His191 and Glu193. The 198-residue stretch at 218–415 (WTMRAFREEA…LGLPEIFVGR (198 aa)) folds into the GMPS ATP-PPase domain. 245-251 (SGGVDSS) is a binding site for ATP.

Homodimer.

It carries out the reaction XMP + L-glutamine + ATP + H2O = GMP + L-glutamate + AMP + diphosphate + 2 H(+). The protein operates within purine metabolism; GMP biosynthesis; GMP from XMP (L-Gln route): step 1/1. Functionally, catalyzes the synthesis of GMP from XMP. The polypeptide is GMP synthase [glutamine-hydrolyzing] (Nitrobacter hamburgensis (strain DSM 10229 / NCIMB 13809 / X14)).